A 205-amino-acid chain; its full sequence is LexA repressor (205 aa).

The segment at residues 28-48 (RAEIARRLGFKSANAAEEHLK) is a DNA-binding region (H-T-H motif). Residues serine 122 and lysine 159 each act as for autocatalytic cleavage activity in the active site.

It belongs to the peptidase S24 family. In terms of assembly, homodimer.

It carries out the reaction Hydrolysis of Ala-|-Gly bond in repressor LexA.. Its function is as follows. Represses a number of genes involved in the response to DNA damage (SOS response), including recA and lexA. In the presence of single-stranded DNA, RecA interacts with LexA causing an autocatalytic cleavage which disrupts the DNA-binding part of LexA, leading to derepression of the SOS regulon and eventually DNA repair. This Shewanella loihica (strain ATCC BAA-1088 / PV-4) protein is LexA repressor.